We begin with the raw amino-acid sequence, 92 residues long: UPF0250 protein VP0718 (92 aa).

Belongs to the UPF0250 family.

This chain is UPF0250 protein VP0718, found in Vibrio parahaemolyticus serotype O3:K6 (strain RIMD 2210633).